A 68-amino-acid polypeptide reads, in one-letter code: U1-agatoxin-Ta1c (68 aa).

Positions 1–17 are cleaved as a signal peptide; it reads MKLQLMICLVLLPCFFC. 3 disulfides stabilise this stretch: C23/C53, C39/C49, and C42/C62. The residue at position 67 (K67) is a Lysine amide.

The protein belongs to the helical arthropod-neuropeptide-derived (HAND) family. Expressed by the venom gland.

Its subcellular location is the secreted. Its function is as follows. Toxin that paralyzes insects. May have a direct effect on the insect central nervous system. The sequence is that of U1-agatoxin-Ta1c from Eratigena agrestis (Hobo spider).